Here is a 790-residue protein sequence, read N- to C-terminus: Kinesin-like protein KIF9 (790 aa).

The Kinesin motor domain occupies 6 to 340 (KVHAFVRVKP…LRFASRMKLV (335 aa)). Residues 12–14 (RVK) and 93–100 (GQTGAGKT) contribute to the ATP site. Residues 342-380 (TEPAINEKYDAERMVKNLEKELALLKQELAIHDSLTNRT) are a coiled coil. Residues 477–578 (QNFGLGVAPF…IRPDTPPSKP (102 aa)) form a disordered region. The segment covering 525–534 (VSTSKTQLVP) has biased composition (polar residues). The residue at position 530 (threonine 530) is a Phosphothreonine. Composition is skewed to basic and acidic residues over residues 537-552 (KDGD…RETS) and 561-570 (SPKEELRPIR). Serine 546 carries the post-translational modification Phosphoserine. Residues 658 to 690 (LLILKLKDLKKQYRSEYQDLRDLRAEIQYCQHL) adopt a coiled-coil conformation.

This sequence belongs to the TRAFAC class myosin-kinesin ATPase superfamily. Kinesin family. In terms of assembly, interacts with HYDIN.

The protein resides in the cytoplasm. It is found in the cytoskeleton. Its subcellular location is the cell projection. The protein localises to the cilium. It localises to the flagellum. The protein resides in the flagellum axoneme. Its function is as follows. Essential for normal male fertility and for progressive motility of spermatozoa. The sequence is that of Kinesin-like protein KIF9 (KIF9) from Homo sapiens (Human).